The following is a 658-amino-acid chain: Zinc finger protein 135 (658 aa).

The region spanning 14–85 is the KRAB domain; sequence VTFEDVVVGF…ESRLPQGVYP (72 aa). The segment at 171-196 is disordered; sequence LNPDLPHQPMTPERQSPHTWGTRGKR. 16 consecutive C2H2-type zinc fingers follow at residues 214–236, 242–264, 270–292, 298–320, 326–348, 354–376, 382–404, 410–432, 438–460, 466–488, 494–516, 522–544, 550–572, 578–600, 606–628, and 634–656; these read YKCQ…HRTH, YECH…QRIH, YKCT…QRTH, YECS…ERTH, YECS…LRIH, YQCG…QRIH, YECH…QRTH, YECG…RRIH, YGCN…ERTH, YECS…QRIH, YECN…QRIH, YECH…RRIH, and YACR…QRTH.

Belongs to the krueppel C2H2-type zinc-finger protein family.

The protein resides in the nucleus. In terms of biological role, plays a role in the regulation of cell morphology and cytoskeletal organization. May be involved in transcriptional regulation. The polypeptide is Zinc finger protein 135 (ZNF135) (Homo sapiens (Human)).